The sequence spans 375 residues: MKVWLLLGLLLVHEALEDVTGQHLPKNKRPKEPGENRIKPTNKKVKPKIPKIKDRDSADSTPKTQSIMMQVLDKGRFQKPAATLSLLAGQSVELRCKGSRIGWSYPAYLDTFKDSRISVKQNERYGQLTLVNSTSADTGEFSCWGQLCSGYICRKDETKTGSTYIFFTEKGELFVPSPSYFDVVYLNPDRQAVVPCRVTVLSAKVTLHREFPAKEIPANGTDIVYDMKRGFVYLQPHSEHQGVVYCRAEAGGRSQISVKYQLLYVAVPSGPPSTTILASSNKVKSGDDVSVLCTVLGEPDVEVEFTWIFPGQKDERPVTIQDTWRLIHRGLGHTTRLSQSVITVEDFETIDAGYYICTAQNLQGQTTVATTVEFS.

Positions 1-21 (MKVWLLLGLLLVHEALEDVTG) are cleaved as a signal peptide. Positions 22–64 (QHLPKNKRPKEPGENRIKPTNKKVKPKIPKIKDRDSADSTPKT) are disordered. Positions 40–50 (PTNKKVKPKIP) are enriched in basic residues. An Ig-like C2-type 1 domain is found at 62–159 (PKTQSIMMQV…GYICRKDETK (98 aa)). A disulfide bridge links Cys-96 with Cys-143. N-linked (GlcNAc...) asparagine glycans are attached at residues Asn-132 and Asn-219. Positions 272 to 375 (PSTTILASSN…TTVATTVEFS (104 aa)) constitute an Ig-like C2-type 2 domain. A disulfide bridge connects residues Cys-293 and Cys-357.

In terms of assembly, forms a complex composed of PDGFRL, TNK2 and GRB2.

The protein resides in the secreted. The polypeptide is Platelet-derived growth factor receptor-like protein (PDGFRL) (Macaca fascicularis (Crab-eating macaque)).